Here is a 167-residue protein sequence, read N- to C-terminus: uncharacterized protein (167 aa).

This is an uncharacterized protein from Homo sapiens (Human).